Consider the following 84-residue polypeptide: Small ribosomal subunit protein bS20 (84 aa).

Belongs to the bacterial ribosomal protein bS20 family.

In terms of biological role, binds directly to 16S ribosomal RNA. The polypeptide is Small ribosomal subunit protein bS20 (Porphyromonas gingivalis (strain ATCC 33277 / DSM 20709 / CIP 103683 / JCM 12257 / NCTC 11834 / 2561)).